A 1464-amino-acid polypeptide reads, in one-letter code: Alpha-glucan water dikinase, chloroplastic (1464 aa).

The transit peptide at 1–77 (MSNSLGNNLL…KRAFSSSPHA (77 aa)) directs the protein to the chloroplast. H1069 (tele-phosphohistidine intermediate) is an active-site residue.

The protein belongs to the PEP-utilizing enzyme family. As to quaternary structure, homodimer. Requires Mg(2+) as cofactor. As to expression, expressed in leaves.

It localises to the plastid. The protein resides in the chloroplast. The catalysed reaction is [(1-&gt;4)-alpha-D-glucosyl](n) + n ATP + n H2O = [(1-&gt;4)-6-phospho-alpha-D-glucosyl](n) + n AMP + n phosphate + 2n H(+). It carries out the reaction ATP + protein L-histidine = ADP + protein N-phospho-L-histidine.. In terms of biological role, mediates the incorporation of phosphate into starch-like alpha-glucan, mostly at the C-6 position of glucose units. Acts as an overall regulator of starch mobilization. Required for starch degradation, suggesting that the phosphate content of starch regulates its degradability. More active on alpha-1,6 branched amylopectin. The protein is Alpha-glucan water dikinase, chloroplastic (R1) of Solanum tuberosum (Potato).